The primary structure comprises 426 residues: Torsin-4A (426 aa).

A disordered region spans residues Gln41–Gly60. Over residues Ser48 to Gly60 the composition is skewed to low complexity. Phosphoserine is present on residues Ser58 and Ser76. Thr84 is subject to Phosphothreonine. Phosphoserine is present on Ser101. Residues Cys117–Ile133 form a helical membrane-spanning segment. Gly189–Ser196 contacts ATP.

Belongs to the ClpA/ClpB family. Torsin subfamily.

It localises to the membrane. The protein is Torsin-4A (Tor4a) of Mus musculus (Mouse).